The chain runs to 90 residues: Envelope protein US9 homolog (90 aa).

The Intravirion segment spans residues 1–63; that stretch reads MEPLRLADAE…IRRRRRQTRA (63 aa). Residues 12–13 carry the Di-leucine internalization motif motif; that stretch reads LL. Residues 29–38 form an acidic region; that stretch reads EAYYTESDDE. A helical; Signal-anchor for type II membrane protein transmembrane segment spans residues 64–84; that stretch reads AGFVAAFVLVALISGGLGALM. Over 85 to 90 the chain is Virion surface; that stretch reads CWLAYR.

The protein belongs to the alphaherpesvirinae envelope protein US9 family. Post-translationally, phosphorylated on serines within the acidic cluster. Phosphorylation determines whether endocytosed viral US9 traffics to the trans-Golgi network or recycles to the cell membrane.

Its subcellular location is the virion membrane. The protein resides in the host Golgi apparatus membrane. It localises to the host smooth endoplasmic reticulum membrane. It is found in the host cell membrane. Its function is as follows. Essential for the anterograde spread of the infection throughout the host nervous system. Together with the gE/gI heterodimer, US9 is involved in the sorting and transport of viral structural components toward axon tips. The protein is Envelope protein US9 homolog of Cercopithecine herpesvirus 1 (CeHV-1).